The following is a 434-amino-acid chain: GTPase Obg (434 aa).

An Obg domain is found at 1–158 (MFLDTAKIKV…RELQLELKIL (158 aa)). Residues 159–336 (ADVGLVGFPS…LLDATAELLD (178 aa)) form the OBG-type G domain. GTP is bound by residues 165–172 (GFPSVGKS), 190–194 (FTTIV), 212–215 (DLPG), 282–285 (NKMD), and 317–319 (SGL). Mg(2+)-binding residues include Ser-172 and Thr-192. Positions 356-434 (GFDEEEKAFE…IGKFEFEFVD (79 aa)) constitute an OCT domain.

It belongs to the TRAFAC class OBG-HflX-like GTPase superfamily. OBG GTPase family. As to quaternary structure, monomer. Mg(2+) serves as cofactor.

It localises to the cytoplasm. Functionally, an essential GTPase which binds GTP, GDP and possibly (p)ppGpp with moderate affinity, with high nucleotide exchange rates and a fairly low GTP hydrolysis rate. Plays a role in control of the cell cycle, stress response, ribosome biogenesis and in those bacteria that undergo differentiation, in morphogenesis control. The polypeptide is GTPase Obg (Streptococcus pneumoniae serotype 19F (strain G54)).